The sequence spans 46 residues: DNA-directed RNA polymerases I, II, and III subunit rpabc4 (46 aa).

Zn(2+) is bound by residues Cys-7, Cys-10, Cys-24, and Cys-27. The C4-type zinc finger occupies 7–27 (CGECGAEHEIKPKEPVKCKDC).

Belongs to the archaeal Rpo12/eukaryotic RPC10 RNA polymerase subunit family. As to quaternary structure, component of the RNA polymerase I (Pol I), RNA polymerase II (Pol II) and RNA polymerase III (Pol III) complexes consisting of at least 13, 12 and 17 subunits, respectively.

It localises to the nucleus. Its function is as follows. DNA-dependent RNA polymerase catalyzes the transcription of DNA into RNA using the four ribonucleoside triphosphates as substrates. Common component of RNA polymerases I, II and III which synthesize ribosomal RNA precursors, mRNA precursors and many functional non-coding RNAs, and a small RNAs, such as 5S rRNA and tRNAs, respectively. The chain is DNA-directed RNA polymerases I, II, and III subunit rpabc4 (polr2k) from Dictyostelium discoideum (Social amoeba).